We begin with the raw amino-acid sequence, 167 residues long: Probable chemoreceptor glutamine deamidase CheD (167 aa).

The protein belongs to the CheD family.

The catalysed reaction is L-glutaminyl-[protein] + H2O = L-glutamyl-[protein] + NH4(+). Functionally, probably deamidates glutamine residues to glutamate on methyl-accepting chemotaxis receptors (MCPs), playing an important role in chemotaxis. The protein is Probable chemoreceptor glutamine deamidase CheD of Natronomonas pharaonis (strain ATCC 35678 / DSM 2160 / CIP 103997 / JCM 8858 / NBRC 14720 / NCIMB 2260 / Gabara) (Halobacterium pharaonis).